The following is a 445-amino-acid chain: 3-phosphoshikimate 1-carboxyvinyltransferase (445 aa).

The interval 1–25 is disordered; it reads MTDSNQPTPLQARKSGALHGTARVP. 3-phosphoshikimate-binding residues include lysine 28, serine 29, and arginine 33. Lysine 28 provides a ligand contact to phosphoenolpyruvate. Phosphoenolpyruvate-binding residues include glycine 101 and arginine 129. 3-phosphoshikimate-binding residues include serine 175, glutamine 177, aspartate 328, and lysine 355. A phosphoenolpyruvate-binding site is contributed by glutamine 177. Aspartate 328 (proton acceptor) is an active-site residue. Phosphoenolpyruvate-binding residues include arginine 359 and arginine 402.

Belongs to the EPSP synthase family. In terms of assembly, monomer.

Its subcellular location is the cytoplasm. The catalysed reaction is 3-phosphoshikimate + phosphoenolpyruvate = 5-O-(1-carboxyvinyl)-3-phosphoshikimate + phosphate. It functions in the pathway metabolic intermediate biosynthesis; chorismate biosynthesis; chorismate from D-erythrose 4-phosphate and phosphoenolpyruvate: step 6/7. Its function is as follows. Catalyzes the transfer of the enolpyruvyl moiety of phosphoenolpyruvate (PEP) to the 5-hydroxyl of shikimate-3-phosphate (S3P) to produce enolpyruvyl shikimate-3-phosphate and inorganic phosphate. The sequence is that of 3-phosphoshikimate 1-carboxyvinyltransferase from Rhodopseudomonas palustris (strain TIE-1).